The primary structure comprises 776 residues: Endonuclease MutS2 (776 aa).

330–337 (GPNTGGKT) is an ATP binding site. One can recognise a Smr domain in the interval 701–776 (LDLRGMRYEE…GSGATIAILK (76 aa)).

This sequence belongs to the DNA mismatch repair MutS family. MutS2 subfamily. Homodimer. Binds to stalled ribosomes, contacting rRNA.

Functionally, endonuclease that is involved in the suppression of homologous recombination and thus may have a key role in the control of bacterial genetic diversity. In terms of biological role, acts as a ribosome collision sensor, splitting the ribosome into its 2 subunits. Detects stalled/collided 70S ribosomes which it binds and splits by an ATP-hydrolysis driven conformational change. Acts upstream of the ribosome quality control system (RQC), a ribosome-associated complex that mediates the extraction of incompletely synthesized nascent chains from stalled ribosomes and their subsequent degradation. Probably generates substrates for RQC. In Lactococcus lactis subsp. lactis (strain IL1403) (Streptococcus lactis), this protein is Endonuclease MutS2.